Here is a 305-residue protein sequence, read N- to C-terminus: Ribosomal RNA small subunit methyltransferase H (305 aa).

Residues 30 to 32 (GGH), Asp49, Phe74, Asp96, and Gln103 each bind S-adenosyl-L-methionine.

It belongs to the methyltransferase superfamily. RsmH family.

The protein resides in the cytoplasm. It carries out the reaction cytidine(1402) in 16S rRNA + S-adenosyl-L-methionine = N(4)-methylcytidine(1402) in 16S rRNA + S-adenosyl-L-homocysteine + H(+). Specifically methylates the N4 position of cytidine in position 1402 (C1402) of 16S rRNA. The chain is Ribosomal RNA small subunit methyltransferase H from Francisella tularensis subsp. mediasiatica (strain FSC147).